The sequence spans 394 residues: Elongation factor Tu 2 (394 aa).

Residues 10 to 204 (KPHVNVGTIG…ALDSYIPEPE (195 aa)) enclose the tr-type G domain. The G1 stretch occupies residues 19–26 (GHVDHGKT). 19–26 (GHVDHGKT) contacts GTP. Threonine 26 serves as a coordination point for Mg(2+). The tract at residues 60–64 (GITIN) is G2. Positions 81 to 84 (DCPG) are G3. Residues 81–85 (DCPGH) and 136–139 (NKCD) contribute to the GTP site. The G4 stretch occupies residues 136 to 139 (NKCD). The segment at 174-176 (SAL) is G5.

Belongs to the TRAFAC class translation factor GTPase superfamily. Classic translation factor GTPase family. EF-Tu/EF-1A subfamily. In terms of assembly, monomer.

The protein resides in the cytoplasm. The catalysed reaction is GTP + H2O = GDP + phosphate + H(+). Functionally, GTP hydrolase that promotes the GTP-dependent binding of aminoacyl-tRNA to the A-site of ribosomes during protein biosynthesis. This is Elongation factor Tu 2 from Shewanella oneidensis (strain ATCC 700550 / JCM 31522 / CIP 106686 / LMG 19005 / NCIMB 14063 / MR-1).